The primary structure comprises 582 residues: uncharacterized protein (582 aa).

The next 12 helical transmembrane spans lie at 29-49, 117-137, 155-175, 225-245, 254-274, 287-307, 329-349, 376-396, 432-452, 458-478, 491-511, and 523-543; these read LFIV…FAAL, ISAP…MGLA, VWAT…MIIV, YVYI…YFLL, FISI…YLLI, ATVI…IVLI, YLYL…ALSV, SIFG…WGLI, IVYL…LFNI, LVVS…IALS, IGMA…PVFF, and IYLY…GNWI.

The protein localises to the cell membrane. This is an uncharacterized protein from Mycoplasmoides gallisepticum (strain R(low / passage 15 / clone 2)) (Mycoplasma gallisepticum).